Here is a 137-residue protein sequence, read N- to C-terminus: uncharacterized protein (137 aa).

4 helical membrane-spanning segments follow: residues 20-39 (YGKIGVATAMAVGAAVGYAV), 44-61 (WFITVIAVLAGVALLSLV), 86-105 (VEIFSIGAALSGAVMLALDL), and 109-131 (AALALEFAVCCVLVLYLIFYGYY).

It is found in the cell membrane. This is an uncharacterized protein from Archaeoglobus fulgidus (strain ATCC 49558 / DSM 4304 / JCM 9628 / NBRC 100126 / VC-16).